The following is a 170-amino-acid chain: Adenine phosphoribosyltransferase (170 aa).

It belongs to the purine/pyrimidine phosphoribosyltransferase family. Homodimer.

Its subcellular location is the cytoplasm. The enzyme catalyses AMP + diphosphate = 5-phospho-alpha-D-ribose 1-diphosphate + adenine. The protein operates within purine metabolism; AMP biosynthesis via salvage pathway; AMP from adenine: step 1/1. Functionally, catalyzes a salvage reaction resulting in the formation of AMP, that is energically less costly than de novo synthesis. The polypeptide is Adenine phosphoribosyltransferase (Bacillus anthracis (strain A0248)).